Consider the following 105-residue polypeptide: PTS system lactose-specific EIIA component (105 aa).

The region spanning Glu4 to Arg102 is the PTS EIIA type-3 domain. Catalysis depends on His78, which acts as the Tele-phosphohistidine intermediate. His78 is modified (phosphohistidine; by HPr). Asp81 contacts Mg(2+).

Homotrimer. Mg(2+) serves as cofactor.

The protein localises to the cytoplasm. In terms of biological role, the phosphoenolpyruvate-dependent sugar phosphotransferase system (sugar PTS), a major carbohydrate active transport system, catalyzes the phosphorylation of incoming sugar substrates concomitantly with their translocation across the cell membrane. The enzyme II LacEF PTS system is involved in lactose transport. This chain is PTS system lactose-specific EIIA component, found in Lactococcus lactis subsp. lactis (Streptococcus lactis).